A 138-amino-acid chain; its full sequence is MQVTVQKPTGEALVTQIKQLAISSKARQIHFLGKRRSTQFYLASESNLVLRDYVTSMLLLPAWKQALQSAYQPGDLLELRILRSGKLPYQGQSHLEDGSLVFVTQAAPYIGQTVRVQVAHVLYSVTGFVMFANLVSSD.

This sequence belongs to the ycf81 family.

It is found in the plastid. It localises to the chloroplast. This is an uncharacterized protein from Nephroselmis olivacea (Green alga).